Consider the following 29-residue polypeptide: Cliotide T18 (29 aa).

The cyclopeptide (Gly-Asn) cross-link spans 1 to 29 (GLPICGETCFTGTCYTPGCTCSYPVCKKN). 3 disulfides stabilise this stretch: Cys-5-Cys-19, Cys-9-Cys-21, and Cys-14-Cys-26.

In terms of processing, contains 3 disulfide bonds. This is a cyclic peptide. In terms of tissue distribution, expressed in root nodules but not in seed.

Functionally, probably participates in a plant defense mechanism. This Clitoria ternatea (Butterfly pea) protein is Cliotide T18.